Reading from the N-terminus, the 499-residue chain is MAMSDKKDVVLIGAGVLSTTFGSMLKTIAPDWDIHLYERLDRPGIESSNERNNAGTGHAALCELNYTVQQPDGSIDIEKAKEINEQFEISKQFWGHLVKSGEIQNPKEFINPLPHISFVRGKNNVKFLKDRYEAMKQFPMFDNIEYTEDIEEMRKWIPLMMKGREDKGYMAASKIDEGTDVNYGELTRKMAQNLKNSPNVEVQYKHEVVDFERLSNGKWSVKIKNLNNGQVFEHQTDYVFIGAGGGAIPLLQKTGIPESKHLGGFPISGQFIACTNPQVIEQHDAKVYGKEPPGTPPMTVPHLDTRYIDGERTLLFGPFANVGPKFLKHGSNLDLFKSIKPYNITTLLASAVKNLPLIKYSFDQVIMTKEGCMNHLRTFYPEARDEDWQVYTAGKRVQVIKDTEENGKGFIQFGTEVVNSEDHSVIALLGESPGASTSVSVALEVLEKNFPEYAKNWEPKIKKMIPSYGESLIDDVQLMRKIRKQTSKDLELGFYDKAK.

Belongs to the MQO family. FAD is required as a cofactor.

It catalyses the reaction (S)-malate + a quinone = a quinol + oxaloacetate. Its pathway is carbohydrate metabolism; tricarboxylic acid cycle; oxaloacetate from (S)-malate (quinone route): step 1/1. This is Probable malate:quinone oxidoreductase 4 from Staphylococcus epidermidis (strain ATCC 35984 / DSM 28319 / BCRC 17069 / CCUG 31568 / BM 3577 / RP62A).